A 330-amino-acid polypeptide reads, in one-letter code: Phospholipase C (330 aa).

The first 34 residues, 1–34 (MVKKTKSNSLKKVATLALANLLLVGALTDNSAKA), serve as a signal peptide directing secretion. Residues Cys-155 and Cys-191 are joined by a disulfide bond.

It belongs to the neutral sphingomyelinase family. Monomer.

Its subcellular location is the secreted. It catalyses the reaction a 1,2-diacyl-sn-glycero-3-phosphocholine + H2O = phosphocholine + a 1,2-diacyl-sn-glycerol + H(+). Its function is as follows. Bacterial hemolysins are exotoxins that attack blood cell membranes and cause cell rupture. Beta-hemolysin is a phospholipase C with specific activity toward sphingomyelins. Has a high specificity for sphingomyelin, hydrolyzes lysophosphatidylcholine at a much lower rate, but has no activity towards phosphatidylcholine, phosphatidylethanolamine, or phosphatidylserine. This Staphylococcus aureus (strain NCTC 8325 / PS 47) protein is Phospholipase C (hlb).